The chain runs to 260 residues: 3'-5' ssDNA/RNA exonuclease TatD (260 aa).

The a divalent metal cation site is built by Glu-92, His-128, and His-153.

This sequence belongs to the metallo-dependent hydrolases superfamily. TatD-type hydrolase family. TatD subfamily. Monomer. Requires Mg(2+) as cofactor.

It is found in the cytoplasm. In terms of biological role, 3'-5' exonuclease that prefers single-stranded DNA and RNA. May play a role in the H(2)O(2)-induced DNA damage repair. This is 3'-5' ssDNA/RNA exonuclease TatD from Pantoea vagans (strain C9-1) (Pantoea agglomerans (strain C9-1)).